The following is a 150-amino-acid chain: Arginine repressor (150 aa).

The protein belongs to the ArgR family.

Its subcellular location is the cytoplasm. The protein operates within amino-acid biosynthesis; L-arginine biosynthesis [regulation]. In terms of biological role, regulates arginine biosynthesis genes. This is Arginine repressor from Clostridium botulinum (strain ATCC 19397 / Type A).